The sequence spans 642 residues: MPVITLPDGSQRHYDHPVSPMDVALDIGPGLAKATIAGRVNGELVDASDLIENDATLSIITAKDEEGLEIIRHSCAHLLGHAIKQLWPHTKMAIGPVVDNGFYYDVDLDRTLTQEDVEALEKRMHELAEKNYDVIKKKVSWHEARETFVKRGESYKVSILDENIAHDDKPGLYHHEEYVDMCRGPHVPNMRFCHHFKLMKTAGAYWRGDSNNKMLQRIYGTAWADKKALNAYLQRLEEAAKRDHRKIGKQLDLYHMQEEAPGMVFWHNDGWTIFRELEVFVRSKLKEYQYQEVKGPFMMDRVLWEKTGHWDNYKDAMFTTSSENREYCIKPMNCPGHVQIFNQGLKSYRDLPLRMAEFGSCHRNEPSGALHGLMRVRGFTQDDAHIFCTEEQIRDEVNACIRMVYDMYSTFGFEKIVVKLSTRPDKRIGSDEMWDRAEADLAVALEENNIPFEYQLGEGAFYGPKIEFTLYDCLDRAWQCGTVQLDFSLPSRLSASYVGEDNERKVPVIIHRAILGSMERFIGILTEEFAGFFPTWLAPVQVVVMNITDSQSEYVNELTQKLQNAGIRVKADLRNEKIGFKIREHTLRRVPYMLVCGDKEVEAGKVAVRTRRGKDLGSLDVNDVIEKLQQEIRSRSLQQLEE.

In terms of domain architecture, TGS spans 1 to 61; it reads MPVITLPDGS…ENDATLSIIT (61 aa). The tract at residues 243–534 is catalytic; the sequence is DHRKIGKQLD…LTEEFAGFFP (292 aa). Zn(2+)-binding residues include C334, H385, and H511.

It belongs to the class-II aminoacyl-tRNA synthetase family. In terms of assembly, homodimer. The cofactor is Zn(2+).

It is found in the cytoplasm. It catalyses the reaction tRNA(Thr) + L-threonine + ATP = L-threonyl-tRNA(Thr) + AMP + diphosphate + H(+). Functionally, catalyzes the attachment of threonine to tRNA(Thr) in a two-step reaction: L-threonine is first activated by ATP to form Thr-AMP and then transferred to the acceptor end of tRNA(Thr). Also edits incorrectly charged L-seryl-tRNA(Thr). This is Threonine--tRNA ligase from Salmonella paratyphi A (strain ATCC 9150 / SARB42).